The sequence spans 685 residues: Heat shock protein homolog SSE1 (685 aa).

Positions 651 to 685 (QALRSNQEASKMADLSAKLAAQRKAEAEAKENAKE) are disordered. The span at 673–685 (RKAEAEAKENAKE) shows a compositional bias: basic and acidic residues.

This sequence belongs to the heat shock protein 70 family.

It is found in the cytoplasm. This is Heat shock protein homolog SSE1 (SSE1) from Naumovozyma castellii (Yeast).